We begin with the raw amino-acid sequence, 92 residues long: Small ribosomal subunit protein uS19c (92 aa).

The protein belongs to the universal ribosomal protein uS19 family.

Its subcellular location is the plastid. It localises to the chloroplast. Its function is as follows. Protein S19 forms a complex with S13 that binds strongly to the 16S ribosomal RNA. The polypeptide is Small ribosomal subunit protein uS19c (Daucus carota (Wild carrot)).